Reading from the N-terminus, the 252-residue chain is Putative zinc finger CCCH domain-containing protein 58 (252 aa).

The segment at 35–62 (NHKSVLCMKWREGRCHNGVACRYAHGEE) adopts a C3H1-type zinc-finger fold. Disordered stretches follow at residues 71–95 (RVGG…SGST), 109–180 (RHGR…SAAD), and 215–252 (TATS…APPK). 2 stretches are compositionally biased toward low complexity: residues 133–149 (SARS…TTPP) and 229–238 (ITTTTSSSTT).

The chain is Putative zinc finger CCCH domain-containing protein 58 from Oryza sativa subsp. japonica (Rice).